A 610-amino-acid chain; its full sequence is DNA mismatch repair protein MutL (610 aa).

The protein belongs to the DNA mismatch repair MutL/HexB family.

In terms of biological role, this protein is involved in the repair of mismatches in DNA. It is required for dam-dependent methyl-directed DNA mismatch repair. May act as a 'molecular matchmaker', a protein that promotes the formation of a stable complex between two or more DNA-binding proteins in an ATP-dependent manner without itself being part of a final effector complex. This is DNA mismatch repair protein MutL from Rickettsia canadensis (strain McKiel).